The primary structure comprises 276 residues: ATP synthase subunit a (276 aa).

The next 6 membrane-spanning stretches (helical) occupy residues tryptophan 47–tyrosine 67, isoleucine 107–isoleucine 127, aspartate 152–isoleucine 172, proline 188–alanine 208, leucine 226–tryptophan 246, and alanine 247–valine 267.

This sequence belongs to the ATPase A chain family. In terms of assembly, F-type ATPases have 2 components, CF(1) - the catalytic core - and CF(0) - the membrane proton channel. CF(1) has five subunits: alpha(3), beta(3), gamma(1), delta(1), epsilon(1). CF(0) has three main subunits: a(1), b(2) and c(9-12). The alpha and beta chains form an alternating ring which encloses part of the gamma chain. CF(1) is attached to CF(0) by a central stalk formed by the gamma and epsilon chains, while a peripheral stalk is formed by the delta and b chains.

It is found in the cell inner membrane. Functionally, key component of the proton channel; it plays a direct role in the translocation of protons across the membrane. In Shewanella halifaxensis (strain HAW-EB4), this protein is ATP synthase subunit a.